We begin with the raw amino-acid sequence, 300 residues long: Large ribosomal subunit protein bL9m (300 aa).

It belongs to the bacterial ribosomal protein bL9 family. In terms of assembly, component of the mitochondrial large ribosomal subunit (mt-LSU). Mature N.crassa 74S mitochondrial ribosomes consist of a small (37S) and a large (54S) subunit. The 37S small subunit contains a 16S ribosomal RNA (16S mt-rRNA) and 32 different proteins. The 54S large subunit contains a 23S rRNA (23S mt-rRNA) and 42 different proteins.

The protein localises to the mitochondrion. In terms of biological role, component of the mitochondrial ribosome (mitoribosome), a dedicated translation machinery responsible for the synthesis of mitochondrial genome-encoded proteins, including at least some of the essential transmembrane subunits of the mitochondrial respiratory chain. The mitoribosomes are attached to the mitochondrial inner membrane and translation products are cotranslationally integrated into the membrane. The protein is Large ribosomal subunit protein bL9m (mrpl50) of Neurospora crassa (strain ATCC 24698 / 74-OR23-1A / CBS 708.71 / DSM 1257 / FGSC 987).